The sequence spans 289 residues: Nucleotide-binding protein Franean1_2060 (289 aa).

13–20 (GLSGAGRS) lines the ATP pocket. 64–67 (DVRG) serves as a coordination point for GTP.

It belongs to the RapZ-like family.

In terms of biological role, displays ATPase and GTPase activities. The polypeptide is Nucleotide-binding protein Franean1_2060 (Parafrankia sp. (strain EAN1pec)).